A 394-amino-acid polypeptide reads, in one-letter code: Phosphoglycerate kinase (394 aa).

Residues 21–23 (DFN), Arg36, 59–62 (HFGR), Arg118, and Arg151 each bind substrate. ATP contacts are provided by residues Lys201, Glu323, and 349–352 (GGDS).

Belongs to the phosphoglycerate kinase family. Monomer.

The protein localises to the cytoplasm. The catalysed reaction is (2R)-3-phosphoglycerate + ATP = (2R)-3-phospho-glyceroyl phosphate + ADP. Its pathway is carbohydrate degradation; glycolysis; pyruvate from D-glyceraldehyde 3-phosphate: step 2/5. The sequence is that of Phosphoglycerate kinase from Brevibacillus brevis (strain 47 / JCM 6285 / NBRC 100599).